The sequence spans 445 residues: Glucose-6-phosphate isomerase (445 aa).

Catalysis depends on E287, which acts as the Proton donor. Catalysis depends on residues H308 and K422.

The protein belongs to the GPI family.

It localises to the cytoplasm. The enzyme catalyses alpha-D-glucose 6-phosphate = beta-D-fructose 6-phosphate. It functions in the pathway carbohydrate biosynthesis; gluconeogenesis. Its pathway is carbohydrate degradation; glycolysis; D-glyceraldehyde 3-phosphate and glycerone phosphate from D-glucose: step 2/4. Catalyzes the reversible isomerization of glucose-6-phosphate to fructose-6-phosphate. In Bacteroides fragilis (strain ATCC 25285 / DSM 2151 / CCUG 4856 / JCM 11019 / LMG 10263 / NCTC 9343 / Onslow / VPI 2553 / EN-2), this protein is Glucose-6-phosphate isomerase.